The following is a 507-amino-acid chain: Phospho-2-dehydro-3-deoxyheptonate aldolase 2, chloroplastic (507 aa).

It belongs to the class-II DAHP synthase family.

It localises to the plastid. The protein localises to the chloroplast. The enzyme catalyses D-erythrose 4-phosphate + phosphoenolpyruvate + H2O = 7-phospho-2-dehydro-3-deoxy-D-arabino-heptonate + phosphate. It participates in metabolic intermediate biosynthesis; chorismate biosynthesis; chorismate from D-erythrose 4-phosphate and phosphoenolpyruvate: step 1/7. In Arabidopsis thaliana (Mouse-ear cress), this protein is Phospho-2-dehydro-3-deoxyheptonate aldolase 2, chloroplastic (DHS2).